A 53-amino-acid chain; its full sequence is MKVDQMFDLDLRKSYEASELSPQASIIKTTIKVSKAVCKTLTCICTGSCSNCK.

Residues 1–24 constitute a propeptide that is removed on maturation; the sequence is MKVDQMFDLDLRKSYEASELSPQA. Ala24 carries the post-translational modification N-acetylalanine. Residue Ser25 is modified to 2,3-didehydroalanine (Ser). 2,3-didehydrobutyrine occurs at positions 29 and 30. The lanthionine (Ser-Cys) cross-link spans 34–38; sequence SKAVC. 3 consecutive cross-links (beta-methyllanthionine (Thr-Cys)) follow at residues 40 to 43, 42 to 45, and 46 to 49; these read TLTC, TCIC, and TGSC. The lanthionine (Ser-Cys) cross-link spans 48-52; sequence SCSNC. At Ser50 the chain carries 2,3-didehydroalanine (Ser).

Maturation of lantibiotics involves the enzymatic conversion of Thr, and Ser into dehydrated AA and the formation of thioether bonds with cysteine. This is followed by membrane translocation and cleavage of the modified precursor. In terms of processing, the structure of the 2,3-didehydrobutyrines is not discussed in PubMed:17071789.

The protein localises to the secreted. Functionally, lanthionine-containing peptide antibiotic (lantibiotic) active on Gram-positive bacteria. The bactericidal activity of lantibiotics is based on depolarization of energized bacterial cytoplasmic membranes, initiated by the formation of aqueous transmembrane pores. Lacks antibacterial activity against Gram-negative bacteria. The protein is Lantibiotic paenibacillin of Paenibacillus polymyxa (Bacillus polymyxa).